Reading from the N-terminus, the 209-residue chain is Large ribosomal subunit protein uL1 (209 aa).

It belongs to the universal ribosomal protein uL1 family. Part of the 50S ribosomal subunit.

In terms of biological role, binds directly to 23S rRNA. The L1 stalk is quite mobile in the ribosome, and is involved in E site tRNA release. Its function is as follows. Protein L1 is also a translational repressor protein, it controls the translation of the L11 operon by binding to its mRNA. This chain is Large ribosomal subunit protein uL1 (rplA), found in Neorickettsia sennetsu (strain ATCC VR-367 / Miyayama) (Ehrlichia sennetsu).